We begin with the raw amino-acid sequence, 411 residues long: Dual-specificity RNA methyltransferase RlmN (411 aa).

Catalysis depends on Glu125, which acts as the Proton acceptor. Positions 131-380 constitute a Radical SAM core domain; the sequence is EEGRGTLCIS…IRTPRGRDIL (250 aa). Cys138 and Cys383 are disulfide-bonded. The [4Fe-4S] cluster site is built by Cys145, Cys149, and Cys152. S-adenosyl-L-methionine is bound by residues 209–210, Ser241, 263–265, and Asn340; these read GE and SLH. Catalysis depends on Cys383, which acts as the S-methylcysteine intermediate.

Belongs to the radical SAM superfamily. RlmN family. [4Fe-4S] cluster is required as a cofactor.

The protein resides in the cytoplasm. It carries out the reaction adenosine(2503) in 23S rRNA + 2 reduced [2Fe-2S]-[ferredoxin] + 2 S-adenosyl-L-methionine = 2-methyladenosine(2503) in 23S rRNA + 5'-deoxyadenosine + L-methionine + 2 oxidized [2Fe-2S]-[ferredoxin] + S-adenosyl-L-homocysteine. The catalysed reaction is adenosine(37) in tRNA + 2 reduced [2Fe-2S]-[ferredoxin] + 2 S-adenosyl-L-methionine = 2-methyladenosine(37) in tRNA + 5'-deoxyadenosine + L-methionine + 2 oxidized [2Fe-2S]-[ferredoxin] + S-adenosyl-L-homocysteine. Specifically methylates position 2 of adenine 2503 in 23S rRNA and position 2 of adenine 37 in tRNAs. m2A2503 modification seems to play a crucial role in the proofreading step occurring at the peptidyl transferase center and thus would serve to optimize ribosomal fidelity. The sequence is that of Dual-specificity RNA methyltransferase RlmN from Brucella melitensis biotype 2 (strain ATCC 23457).